The sequence spans 316 residues: Small ribosomal subunit biogenesis GTPase RsgA (316 aa).

The 166-residue stretch at 83–248 folds into the CP-type G domain; sequence DQYKSKLFAA…LIDSPGFQEF (166 aa). GTP is bound by residues 131-134 and 185-193; these read NKTD and GQSGMGKST. C272, C277, H279, and C285 together coordinate Zn(2+).

The protein belongs to the TRAFAC class YlqF/YawG GTPase family. RsgA subfamily. As to quaternary structure, monomer. Associates with 30S ribosomal subunit, binds 16S rRNA. It depends on Zn(2+) as a cofactor.

The protein localises to the cytoplasm. One of several proteins that assist in the late maturation steps of the functional core of the 30S ribosomal subunit. Helps release RbfA from mature subunits. May play a role in the assembly of ribosomal proteins into the subunit. Circularly permuted GTPase that catalyzes slow GTP hydrolysis, GTPase activity is stimulated by the 30S ribosomal subunit. This is Small ribosomal subunit biogenesis GTPase RsgA from Paraburkholderia xenovorans (strain LB400).